Reading from the N-terminus, the 524-residue chain is Tubulin-specific chaperone E (524 aa).

Serine 2 bears the N-acetylserine mark. The 45-residue stretch at 27–71 folds into the CAP-Gly domain; that stretch reads GAVPPVAGLWLGVEWDNPERGKHDGSHEGTMYFKCRHPTGGSFVR. LRR repeat units follow at residues 154 to 175, 180 to 201, 206 to 227, 231 to 253, 254 to 273, 279 to 300, and 309 to 330; these read NIRV…ILIA, DLEA…PTLT, TLKT…HCAP, VLQE…NALQ, NLRL…QLCL, RLEH…DAEI, and ALTY…NELD. The 39-residue stretch at 343 to 381 folds into the LRRCT domain; it reads NPLTKGDKAEEIIIAKIGQLKTLNRCQILPEERRGAELD. An N6-acetyllysine modification is found at lysine 460. A Phosphoserine modification is found at serine 492.

It belongs to the TBCE family. Supercomplex made of cofactors A to E. Cofactors A and D function by capturing and stabilizing tubulin in a quasi-native conformation. Cofactor E binds to the cofactor D-tubulin complex; interaction with cofactor C then causes the release of tubulin polypeptides that are committed to the native state. Cofactors B and E can form a heterodimer which binds to alpha-tubulin and enhances their ability to dissociate tubulin heterodimers. Interacts with TBCD.

The protein localises to the cytoplasm. It localises to the cytoskeleton. Tubulin-folding protein; involved in the second step of the tubulin folding pathway and in the regulation of tubulin heterodimer dissociation. Required for correct organization of microtubule cytoskeleton and mitotic splindle, and maintenance of the neuronal microtubule network. This is Tubulin-specific chaperone E (Tbce) from Rattus norvegicus (Rat).